We begin with the raw amino-acid sequence, 203 residues long: dITP/XTP pyrophosphatase (203 aa).

7-12 (TGNRDK) lines the substrate pocket. The active-site Proton acceptor is the aspartate 73. Aspartate 73 serves as a coordination point for Mg(2+). Substrate is bound by residues serine 74, 155 to 158 (FGYD), lysine 178, and 183 to 184 (HR).

It belongs to the HAM1 NTPase family. As to quaternary structure, homodimer. Mg(2+) serves as cofactor.

It catalyses the reaction XTP + H2O = XMP + diphosphate + H(+). The enzyme catalyses dITP + H2O = dIMP + diphosphate + H(+). The catalysed reaction is ITP + H2O = IMP + diphosphate + H(+). Pyrophosphatase that catalyzes the hydrolysis of nucleoside triphosphates to their monophosphate derivatives, with a high preference for the non-canonical purine nucleotides XTP (xanthosine triphosphate), dITP (deoxyinosine triphosphate) and ITP. Seems to function as a house-cleaning enzyme that removes non-canonical purine nucleotides from the nucleotide pool, thus preventing their incorporation into DNA/RNA and avoiding chromosomal lesions. This is dITP/XTP pyrophosphatase from Wolinella succinogenes (strain ATCC 29543 / DSM 1740 / CCUG 13145 / JCM 31913 / LMG 7466 / NCTC 11488 / FDC 602W) (Vibrio succinogenes).